Reading from the N-terminus, the 510-residue chain is Light-independent protochlorophyllide reductase subunit B (510 aa).

Residue Asp36 coordinates [4Fe-4S] cluster. Asp296 (proton donor) is an active-site residue. Position 431-432 (431-432 (GM)) interacts with substrate.

The protein belongs to the ChlB/BchB/BchZ family. In terms of assembly, protochlorophyllide reductase is composed of three subunits; ChlL, ChlN and ChlB. Forms a heterotetramer of two ChlB and two ChlN subunits. Requires [4Fe-4S] cluster as cofactor.

The catalysed reaction is chlorophyllide a + oxidized 2[4Fe-4S]-[ferredoxin] + 2 ADP + 2 phosphate = protochlorophyllide a + reduced 2[4Fe-4S]-[ferredoxin] + 2 ATP + 2 H2O. It participates in porphyrin-containing compound metabolism; chlorophyll biosynthesis (light-independent). In terms of biological role, component of the dark-operative protochlorophyllide reductase (DPOR) that uses Mg-ATP and reduced ferredoxin to reduce ring D of protochlorophyllide (Pchlide) to form chlorophyllide a (Chlide). This reaction is light-independent. The NB-protein (ChlN-ChlB) is the catalytic component of the complex. The protein is Light-independent protochlorophyllide reductase subunit B of Synechococcus sp. (strain JA-2-3B'a(2-13)) (Cyanobacteria bacterium Yellowstone B-Prime).